The chain runs to 151 residues: Nascent polypeptide-associated complex subunit beta (151 aa).

The NAC-A/B domain occupies glutamate 32–isoleucine 97. A disordered region spans residues glycine 122–glutamate 151.

The protein belongs to the NAC-beta family. As to quaternary structure, part of the nascent polypeptide-associated complex (NAC), consisting of EGD2 and EGD1. NAC associates with ribosomes via EGD1.

Its subcellular location is the cytoplasm. The protein localises to the nucleus. Component of the nascent polypeptide-associated complex (NAC), a dynamic component of the ribosomal exit tunnel, protecting the emerging polypeptides from interaction with other cytoplasmic proteins to ensure appropriate nascent protein targeting. The NAC complex also promotes mitochondrial protein import by enhancing productive ribosome interactions with the outer mitochondrial membrane and blocks the inappropriate interaction of ribosomes translating non-secretory nascent polypeptides with translocation sites in the membrane of the endoplasmic reticulum. EGD1 may act as a transcription factor that exert a negative effect on the expression of several genes that are transcribed by RNA polymerase II. The chain is Nascent polypeptide-associated complex subunit beta (EGD1) from Meyerozyma guilliermondii (strain ATCC 6260 / CBS 566 / DSM 6381 / JCM 1539 / NBRC 10279 / NRRL Y-324) (Yeast).